A 163-amino-acid polypeptide reads, in one-letter code: Nucleotide-binding protein RBAM_011030 (163 aa).

Belongs to the YajQ family.

In terms of biological role, nucleotide-binding protein. This is Nucleotide-binding protein RBAM_011030 from Bacillus velezensis (strain DSM 23117 / BGSC 10A6 / LMG 26770 / FZB42) (Bacillus amyloliquefaciens subsp. plantarum).